Reading from the N-terminus, the 128-residue chain is Ribonuclease P protein component 4 (128 aa).

Residues C67, C70, C96, and C99 each coordinate Zn(2+).

Belongs to the eukaryotic/archaeal RNase P protein component 4 family. As to quaternary structure, consists of a catalytic RNA component and at least 4-5 protein subunits. Requires Zn(2+) as cofactor.

It localises to the cytoplasm. The enzyme catalyses Endonucleolytic cleavage of RNA, removing 5'-extranucleotides from tRNA precursor.. Functionally, part of ribonuclease P, a protein complex that generates mature tRNA molecules by cleaving their 5'-ends. This chain is Ribonuclease P protein component 4, found in Methanopyrus kandleri (strain AV19 / DSM 6324 / JCM 9639 / NBRC 100938).